The sequence spans 431 residues: 5-methylthioadenosine/S-adenosylhomocysteine deaminase (431 aa).

H68 and H70 together coordinate Zn(2+). 2 residues coordinate substrate: E97 and H186. Residue H213 coordinates Zn(2+). 2 residues coordinate substrate: E216 and D301. D301 provides a ligand contact to Zn(2+).

It belongs to the metallo-dependent hydrolases superfamily. MTA/SAH deaminase family. It depends on Zn(2+) as a cofactor.

The enzyme catalyses S-adenosyl-L-homocysteine + H2O + H(+) = S-inosyl-L-homocysteine + NH4(+). It catalyses the reaction S-methyl-5'-thioadenosine + H2O + H(+) = S-methyl-5'-thioinosine + NH4(+). Functionally, catalyzes the deamination of 5-methylthioadenosine and S-adenosyl-L-homocysteine into 5-methylthioinosine and S-inosyl-L-homocysteine, respectively. Is also able to deaminate adenosine. The chain is 5-methylthioadenosine/S-adenosylhomocysteine deaminase from Halothermothrix orenii (strain H 168 / OCM 544 / DSM 9562).